The primary structure comprises 410 residues: Cysteine desulfurase IscS (410 aa).

Pyridoxal 5'-phosphate contacts are provided by residues 80–81 (AT), asparagine 160, glutamine 188, and 208–210 (SGH). Lysine 211 is subject to N6-(pyridoxal phosphate)lysine. Threonine 248 contacts pyridoxal 5'-phosphate. Catalysis depends on cysteine 334, which acts as the Cysteine persulfide intermediate. Cysteine 334 is a [2Fe-2S] cluster binding site.

The protein belongs to the class-V pyridoxal-phosphate-dependent aminotransferase family. NifS/IscS subfamily. In terms of assembly, homodimer. Forms a heterotetramer with IscU, interacts with other sulfur acceptors. Requires pyridoxal 5'-phosphate as cofactor.

The protein localises to the cytoplasm. The catalysed reaction is (sulfur carrier)-H + L-cysteine = (sulfur carrier)-SH + L-alanine. It participates in cofactor biosynthesis; iron-sulfur cluster biosynthesis. Master enzyme that delivers sulfur to a number of partners involved in Fe-S cluster assembly, tRNA modification or cofactor biosynthesis. Catalyzes the removal of elemental sulfur atoms from cysteine to produce alanine. Functions as a sulfur delivery protein for Fe-S cluster synthesis onto IscU, an Fe-S scaffold assembly protein, as well as other S acceptor proteins. This chain is Cysteine desulfurase IscS, found in Rickettsia massiliae (strain Mtu5).